A 211-amino-acid polypeptide reads, in one-letter code: Calaxin (211 aa).

EF-hand domains lie at 64 to 99 (TDDMIMDRVFRGFDKDNDGCVNVLEWIHGLSLFLRG), 100 to 135 (SLEEKMKYCFEVFDLNGDGFISKEEMFHMLKNSLLK), and 145 to 180 (GIKDLVEITLKKMDHDHDGKLSFADYELAVREETLL). Positions 77, 79, 81, 83, 88, 113, 115, 117, 124, 158, 160, 162, 164, and 169 each coordinate Ca(2+).

In terms of assembly, component of the outer dynein arm-docking complex along with ODAD1, ODAD2, ODAD3 and ODAD4. In terms of tissue distribution, strong expression in the respiratory epithelium. Expressed in the sperm.

Its subcellular location is the cytoplasm. It localises to the cytoskeleton. It is found in the cilium axoneme. The protein localises to the cell projection. The protein resides in the cilium. Its subcellular location is the flagellum. Component of the outer dynein arm-docking complex (ODA-DC) that mediates outer dynein arms (ODA) binding onto the doublet microtubule. Seems to regulate the assembly of both ODAs and their axonemal docking complex onto ciliary microtubules. Regulates ciliary and flagellar motility and is required for cilia-driven determination of body laterality. In Homo sapiens (Human), this protein is Calaxin.